The sequence spans 279 residues: Reaction center protein L chain (279 aa).

3 helical membrane-spanning segments follow: residues 33 to 56, 85 to 113, and 116 to 141; these read GFFG…GASQ, GLWQ…RKLG, and YHVP…ILMG. Residues histidine 154 and histidine 174 each contribute to the (7R,8Z)-bacteriochlorophyll b site. Residues 171-200 traverse the membrane as a helical segment; that stretch reads NPAHMLAITFFFTTTLAMSMHGGLILSAAN. A Fe cation-binding site is contributed by histidine 191. Phenylalanine 217 is an a ubiquinone binding site. The chain crosses the membrane as a helical span at residues 226 to 252; the sequence is GSLGIHRLGLFLALSAAFWSAVCIVIS. Histidine 231 serves as a coordination point for Fe cation.

It belongs to the reaction center PufL/M/PsbA/D family. As to quaternary structure, reaction center is composed of four bacteriochlorophylls, two bacteriopheophytins, two ubiquinones, one iron, and three highly hydrophobic polypeptide chains (designated L, M, and H).

It localises to the cell inner membrane. Its function is as follows. The reaction center is a membrane-bound complex that mediates the initial photochemical event in the electron transfer process of photosynthesis. The polypeptide is Reaction center protein L chain (pufL) (Rubrivivax gelatinosus (Rhodocyclus gelatinosus)).